The sequence spans 601 residues: Urocanate hydratase (601 aa).

Residues 63–64 (GG) and Gln141 contribute to the NAD(+) site. An insert region spans residues 172-201 (SDRPSALLKQGLSPEGTAPGSGRSSAQVPG). A disordered region spans residues 179–200 (LKQGLSPEGTAPGSGRSSAQVP). Residues 216 to 218 (GMG), Glu236, 282 to 283 (NA), 307 to 311 (QTSAH), 317 to 318 (YL), and Tyr368 contribute to the NAD(+) site. Residue Cys456 is part of the active site. Position 538 (Gly538) interacts with NAD(+).

The protein belongs to the urocanase family. NAD(+) is required as a cofactor.

It localises to the cytoplasm. The catalysed reaction is 4-imidazolone-5-propanoate = trans-urocanate + H2O. It participates in amino-acid degradation; L-histidine degradation into L-glutamate; N-formimidoyl-L-glutamate from L-histidine: step 2/3. In terms of biological role, catalyzes the conversion of urocanate to 4-imidazolone-5-propionate. In Ralstonia nicotianae (strain ATCC BAA-1114 / GMI1000) (Ralstonia solanacearum), this protein is Urocanate hydratase.